The sequence spans 189 residues: Putative L,D-transpeptidase in ATP synthase subunits region ORF 5 (189 aa).

Positions Met1–Ala35 form a signal peptide, tat-type signal. Positions Pro59–Ile189 constitute a L,D-TPase catalytic domain. Catalysis depends on His149, which acts as the Proton donor/acceptor. Cys165 acts as the Nucleophile in catalysis.

Belongs to the YkuD family. In terms of processing, predicted to be exported by the Tat system. The position of the signal peptide cleavage has not been experimentally proven.

It functions in the pathway cell wall biogenesis; peptidoglycan biosynthesis. The chain is Putative L,D-transpeptidase in ATP synthase subunits region ORF 5 from Fuscovulum blasticum (Rhodobacter blasticus).